The sequence spans 549 residues: Chaperonin GroEL (549 aa).

Residues 30–33, Lys51, 87–91, Gly415, and Asp495 each bind ATP; these read TLGP and DGTTT.

The protein belongs to the chaperonin (HSP60) family. In terms of assembly, forms a cylinder of 14 subunits composed of two heptameric rings stacked back-to-back. Interacts with the co-chaperonin GroES.

The protein resides in the cytoplasm. The enzyme catalyses ATP + H2O + a folded polypeptide = ADP + phosphate + an unfolded polypeptide.. Its function is as follows. Together with its co-chaperonin GroES, plays an essential role in assisting protein folding. The GroEL-GroES system forms a nano-cage that allows encapsulation of the non-native substrate proteins and provides a physical environment optimized to promote and accelerate protein folding. The chain is Chaperonin GroEL from Colwellia maris.